A 149-amino-acid chain; its full sequence is MAAALTRPPPGTVQCFGRKKTAVAVSYCKPGRGLIKVNGVPIELIRPEMLRLKAFEPILLAGRSRFKDIDMRIRVRGGGKTSQIYAIRQAIAKALVAYYQKYVDEASKKEVKDIFARYDRTLLVADPRRCEPKKFGGRGARARFQKSYR.

The protein belongs to the universal ribosomal protein uS9 family.

The protein resides in the cytoplasm. This chain is Small ribosomal subunit protein uS9 (RPS16A), found in Oryza sativa subsp. indica (Rice).